The chain runs to 270 residues: Glucosamine-6-phosphate deaminase (270 aa).

Asp-72 (proton acceptor; for enolization step) is an active-site residue. Residue Asp-141 is the For ring-opening step of the active site. Residue His-143 is the Proton acceptor; for ring-opening step of the active site. Residue Glu-148 is the For ring-opening step of the active site.

This sequence belongs to the glucosamine/galactosamine-6-phosphate isomerase family. NagB subfamily. In terms of assembly, homohexamer.

It carries out the reaction alpha-D-glucosamine 6-phosphate + H2O = beta-D-fructose 6-phosphate + NH4(+). The protein operates within amino-sugar metabolism; N-acetylneuraminate degradation; D-fructose 6-phosphate from N-acetylneuraminate: step 5/5. Its activity is regulated as follows. Allosterically activated by N-acetylglucosamine 6-phosphate (GlcNAc6P). Functionally, catalyzes the reversible isomerization-deamination of glucosamine 6-phosphate (GlcN6P) to form fructose 6-phosphate (Fru6P) and ammonium ion. This is Glucosamine-6-phosphate deaminase from Haemophilus influenzae (strain PittEE).